We begin with the raw amino-acid sequence, 486 residues long: Homoserine O-acetyltransferase (486 aa).

Residues 66 to 436 (NVLVICHALT…PEGHDAFLLE (371 aa)) form the AB hydrolase-1 domain. S162 is an active-site residue. S162 functions as the Nucleophile in the catalytic mechanism. The segment at 248 to 274 (KFSRRSPSIAQQQKAQKAEVRKPSTVS) is disordered. A compositionally biased stretch (polar residues) spans 250 to 262 (SRRSPSIAQQQKA). Catalysis depends on residues D401 and H430.

Belongs to the AB hydrolase superfamily. MetX family.

The enzyme catalyses L-homoserine + acetyl-CoA = O-acetyl-L-homoserine + CoA. The protein operates within amino-acid biosynthesis; L-methionine biosynthesis via de novo pathway; O-acetyl-L-homoserine from L-homoserine: step 1/1. In terms of biological role, commits homoserine to the methionine biosynthesis pathway by catalyzing its O-acetylation. This chain is Homoserine O-acetyltransferase (MET2), found in Saccharomyces pastorianus (Lager yeast).